A 102-amino-acid polypeptide reads, in one-letter code: ATP-dependent Clp protease adapter protein ClpS (102 aa).

This sequence belongs to the ClpS family. In terms of assembly, binds to the N-terminal domain of the chaperone ClpA.

Involved in the modulation of the specificity of the ClpAP-mediated ATP-dependent protein degradation. This Janthinobacterium sp. (strain Marseille) (Minibacterium massiliensis) protein is ATP-dependent Clp protease adapter protein ClpS.